The following is a 627-amino-acid chain: 5-aminolevulinate synthase, non-specific, mitochondrial (627 aa).

A mitochondrion-targeting transit peptide spans 1 to 58 (MDVIVRRCPFLARVPQAFFQQSKKSLAVYAQRCPFMMELASKPMAPSLARALCSSSSS). Positions 204, 321, and 340 each coordinate substrate. Residues Ser-373, His-401, and Thr-429 each contribute to the pyridoxal 5'-phosphate site. Lys-432 is a catalytic residue. N6-(pyridoxal phosphate)lysine is present on Lys-432. The pyridoxal 5'-phosphate site is built by Thr-461 and Thr-462. Thr-549 provides a ligand contact to substrate.

Belongs to the class-II pyridoxal-phosphate-dependent aminotransferase family. As to quaternary structure, homodimer. Requires pyridoxal 5'-phosphate as cofactor.

Its subcellular location is the mitochondrion inner membrane. The catalysed reaction is succinyl-CoA + glycine + H(+) = 5-aminolevulinate + CO2 + CoA. It functions in the pathway porphyrin-containing compound metabolism; protoporphyrin-IX biosynthesis; 5-aminolevulinate from glycine: step 1/1. In terms of biological role, catalyzes the pyridoxal 5'-phosphate (PLP)-dependent condensation of succinyl-CoA and glycine to form aminolevulinic acid (ALA), with CoA and CO2 as by-products. The protein is 5-aminolevulinate synthase, non-specific, mitochondrial (alas1) of Opsanus tau (Oyster toadfish).